The sequence spans 163 residues: Ribosome maturation factor RimM (163 aa).

The PRC barrel domain maps to 92–161; that stretch reads PGEYYHHDLI…AETVTVNAAF (70 aa).

The protein belongs to the RimM family. As to quaternary structure, binds ribosomal protein uS19.

It localises to the cytoplasm. An accessory protein needed during the final step in the assembly of 30S ribosomal subunit, possibly for assembly of the head region. Essential for efficient processing of 16S rRNA. May be needed both before and after RbfA during the maturation of 16S rRNA. It has affinity for free ribosomal 30S subunits but not for 70S ribosomes. The sequence is that of Ribosome maturation factor RimM from Sphingopyxis alaskensis (strain DSM 13593 / LMG 18877 / RB2256) (Sphingomonas alaskensis).